Consider the following 317-residue polypeptide: Ribonuclease Z (317 aa).

Residues H61, H63, D65, H66, H139, D210, and H268 each coordinate Zn(2+). Residue D65 is the Proton acceptor of the active site.

Belongs to the RNase Z family. Homodimer. The cofactor is Zn(2+).

It carries out the reaction Endonucleolytic cleavage of RNA, removing extra 3' nucleotides from tRNA precursor, generating 3' termini of tRNAs. A 3'-hydroxy group is left at the tRNA terminus and a 5'-phosphoryl group is left at the trailer molecule.. Its activity is regulated as follows. Inhibited by high salt concentrations. In terms of biological role, zinc phosphodiesterase, which displays some tRNA 3'-processing endonuclease activity. Probably involved in tRNA maturation, by removing a 3'-trailer from precursor tRNA. Can also catalyze the 5' end cleavage of the 5S rRNA. The polypeptide is Ribonuclease Z (Haloferax volcanii (strain ATCC 29605 / DSM 3757 / JCM 8879 / NBRC 14742 / NCIMB 2012 / VKM B-1768 / DS2) (Halobacterium volcanii)).